The sequence spans 448 residues: Putative flavin-containing monooxygenase FMO GS-OX-like 10 (448 aa).

18–23 is a binding site for FAD; it reads GAGAAG. Residue 212-217 participates in NADP(+) binding; that stretch reads GSSVSG.

The protein belongs to the FMO family. It depends on FAD as a cofactor.

Its function is as follows. Catalyzes the conversion of methylthioalkyl glucosinolates of any chain length into methylsulfinylalkyl glucosinolates. The protein is Putative flavin-containing monooxygenase FMO GS-OX-like 10 of Arabidopsis thaliana (Mouse-ear cress).